A 187-amino-acid polypeptide reads, in one-letter code: Core-binding factor subunit beta (187 aa).

S10 carries the post-translational modification Phosphoserine; by CK2. The tract at residues 139 to 187 (AQQAFEEARRRTREFEDRDRSHREEMEARRQQDPSPGSNLGGGDDLKLR) is disordered. Basic and acidic residues predominate over residues 144–170 (EEARRRTREFEDRDRSHREEMEARRQQ). Residue S159 is modified to Phosphoserine; by PKC.

This sequence belongs to the CBF-beta family. Heterodimer with RUNX1, RUNX2 and RUNX3. Interacts with COPRS. Found in a complex with PRMT5 and RUNX1. Expressed in all tissues tested. Highest level in thymus, but also abundantly expressed in muscle, lung and brain.

The protein localises to the nucleus. Its function is as follows. Forms the heterodimeric complex core-binding factor (CBF) with RUNX family proteins (RUNX1, RUNX2, and RUNX3). RUNX members modulate the transcription of their target genes through recognizing the core consensus binding sequence 5'-TGTGGT-3', or very rarely, 5'-TGCGGT-3', within their regulatory regions via their runt domain, while CBFB is a non-DNA-binding regulatory subunit that allosterically enhances the sequence-specific DNA-binding capacity of RUNX. The heterodimers bind to the core site of a number of enhancers and promoters, including murine leukemia virus, polyomavirus enhancer, T-cell receptor enhancers, LCK, IL3 and GM-CSF promoters. CBF complexes repress ZBTB7B transcription factor during cytotoxic (CD8+) T cell development. They bind to RUNX-binding sequence within the ZBTB7B locus acting as transcriptional silencer and allowing for cytotoxic T cell differentiation. In Mus musculus (Mouse), this protein is Core-binding factor subunit beta (Cbfb).